Reading from the N-terminus, the 97-residue chain is Aspartyl/glutamyl-tRNA(Asn/Gln) amidotransferase subunit C (97 aa).

This sequence belongs to the GatC family. As to quaternary structure, heterotrimer of A, B and C subunits.

It carries out the reaction L-glutamyl-tRNA(Gln) + L-glutamine + ATP + H2O = L-glutaminyl-tRNA(Gln) + L-glutamate + ADP + phosphate + H(+). The catalysed reaction is L-aspartyl-tRNA(Asn) + L-glutamine + ATP + H2O = L-asparaginyl-tRNA(Asn) + L-glutamate + ADP + phosphate + 2 H(+). Functionally, allows the formation of correctly charged Asn-tRNA(Asn) or Gln-tRNA(Gln) through the transamidation of misacylated Asp-tRNA(Asn) or Glu-tRNA(Gln) in organisms which lack either or both of asparaginyl-tRNA or glutaminyl-tRNA synthetases. The reaction takes place in the presence of glutamine and ATP through an activated phospho-Asp-tRNA(Asn) or phospho-Glu-tRNA(Gln). The polypeptide is Aspartyl/glutamyl-tRNA(Asn/Gln) amidotransferase subunit C (Prochlorococcus marinus (strain MIT 9215)).